Reading from the N-terminus, the 85-residue chain is Toxin CsE8 (85 aa).

Positions 1-19 (MNSLLMITACLVLFGTVWS) are cleaved as a signal peptide. One can recognise an LCN-type CS-alpha/beta domain in the interval 20-83 (EKGYLVHEDT…TWPLIGKLCG (64 aa)). Cystine bridges form between Cys31–Cys82, Cys35–Cys58, Cys44–Cys63, and Cys48–Cys65. Residue Cys82 is modified to Cysteine amide.

It belongs to the long (4 C-C) scorpion toxin superfamily. Sodium channel inhibitor family. Beta subfamily. As to expression, expressed by the venom gland.

Its subcellular location is the secreted. Functionally, beta toxins bind voltage-independently at site-4 of sodium channels (Nav) and shift the voltage of activation toward more negative potentials thereby affecting sodium channel activation and promoting spontaneous and repetitive firing. The chain is Toxin CsE8 from Centruroides sculpturatus (Arizona bark scorpion).